Consider the following 323-residue polypeptide: GILT-like protein C02D5.2 (323 aa).

The helical transmembrane segment at 13–32 (LICRPILTFSSLHILTAFLI) threads the bilayer. An N-linked (GlcNAc...) asparagine glycan is attached at asparagine 35. A run of 2 helical transmembrane segments spans residues 37 to 59 (SYIN…HRFL) and 87 to 104 (YIYG…YRSL). Asparagine 289 carries N-linked (GlcNAc...) asparagine glycosylation.

The protein belongs to the GILT family.

It is found in the membrane. This Caenorhabditis elegans protein is GILT-like protein C02D5.2.